The sequence spans 179 residues: Large ribosomal subunit protein uL5 (179 aa).

Belongs to the universal ribosomal protein uL5 family. In terms of assembly, part of the 50S ribosomal subunit; part of the 5S rRNA/L5/L18/L25 subcomplex. Contacts the 5S rRNA and the P site tRNA. Forms a bridge to the 30S subunit in the 70S ribosome.

In terms of biological role, this is one of the proteins that bind and probably mediate the attachment of the 5S RNA into the large ribosomal subunit, where it forms part of the central protuberance. In the 70S ribosome it contacts protein S13 of the 30S subunit (bridge B1b), connecting the 2 subunits; this bridge is implicated in subunit movement. Contacts the P site tRNA; the 5S rRNA and some of its associated proteins might help stabilize positioning of ribosome-bound tRNAs. In Geotalea daltonii (strain DSM 22248 / JCM 15807 / FRC-32) (Geobacter daltonii), this protein is Large ribosomal subunit protein uL5.